A 516-amino-acid chain; its full sequence is Propionyl-CoA carboxylase, carboxyltransferase subunit (516 aa).

Residues 1–32 (MTMEDRIDELREKREEALKGGGEDRIASQHDK) form a disordered region. In terms of domain architecture, CoA carboxyltransferase N-terminal spans 3 to 259 (MEDRIDELRE…NNVEDPPRVE (257 aa)). Positions 263-509 (DPERVADELE…KSKRKSQPDK (247 aa)) constitute a CoA carboxyltransferase C-terminal domain.

The protein belongs to the AccD/PCCB family. The propionyl coenzyme A carboxylase (PCC) complex is composed of three subunits: PccA (biotin carboxylase and biotin-carboxyl carrier), PccB (carboxyltransferase) and PccX.

The catalysed reaction is propanoyl-CoA + hydrogencarbonate + ATP = (S)-methylmalonyl-CoA + ADP + phosphate + H(+). Its pathway is metabolic intermediate metabolism; propanoyl-CoA degradation; succinyl-CoA from propanoyl-CoA: step 1/3. Part of the propionyl coenzyme A carboxylase (PCC) complex involved in propionate utilization and in the production of the poly(3-hydroxybutyrate-co-3-hydroxyvalerate)(PHBV), which is a water-insoluble biopolymer used as intracellular energy reserve material when cells grow under conditions of nutrient limitation. The complex catalyzes the carboxylation of propionyl-CoA to methylmalonyl-CoA. PCC is also able to catalyze the carboxylation of acetyl-CoA. This chain is Propionyl-CoA carboxylase, carboxyltransferase subunit, found in Haloferax mediterranei (strain ATCC 33500 / DSM 1411 / JCM 8866 / NBRC 14739 / NCIMB 2177 / R-4) (Halobacterium mediterranei).